We begin with the raw amino-acid sequence, 225 residues long: C-reactive protein (225 aa).

Positions 1–20 (MEKLLWCFLTLVSFSNMSDQ) are cleaved as a signal peptide. The 202-residue stretch at 24-225 (HKKAFVFPKE…EVHVKPQLWP (202 aa)) folds into the Pentraxin (PTX) domain. A disulfide bond links C55 and C116. Residues N80, Q158, D159, and Q169 each contribute to the Ca(2+) site.

This sequence belongs to the pentraxin family. Homopentamer. Pentraxin (or pentaxin) have a discoid arrangement of 5 non-covalently bound subunits. Interacts with FCN1; may regulate monocyte activation by FCN1. The cofactor is Ca(2+). As to expression, found in plasma.

It localises to the secreted. Displays several functions associated with host defense: it promotes agglutination, bacterial capsular swelling, phagocytosis and complement fixation through its calcium-dependent binding to phosphorylcholine. Can interact with DNA and histones and may scavenge nuclear material released from damaged circulating cells. The sequence is that of C-reactive protein (CRP) from Oryctolagus cuniculus (Rabbit).